A 1176-amino-acid polypeptide reads, in one-letter code: MLEGRILADFRQTDASLHQGRPQSSSNSSVPGAPNRVSFAKLREPLEVPGLLDVQTDSFEWLIGSQRWRESAAQRGDATPVGGLEEVLYELSPIEDFSGSMSLSFSDPRFDEVKAPVDECKDKDMTYAAPLFVTAEFINNNTGEIKSQTVFMGGFPMMTEKGTFIINGTERVVVSQLVRSPGVYFDETIDKSTDKLLHSVKVIPSRGAWLEFDVDKRDTVGVRIDRKRRQPVTVLLKALGWSNEQIHERFGFSEIMMGTLEKDNTAGTDEALLDIYRKLRPGEPPTKESAQTLLENLFFKEKRYDLARVGRYKVNKKLGLNAGQPITSSTLTEEDVVATIEYLVRLHEGQTAMTAPGGVEVPVETDDIDHFGNRRLRTVGELIQNQIRVGMSRMERVVRERMTTQDVEAITPQTLINIRPVVAAIKEFFGTSQLSQFMDQNNPLSGLTHKRRLSALGPGGLSRERAGLEVRDVHPSHYGRMCPIETPEGPNIGLIGSLSVYARVNPFGFIETPYRKVVDGVVSDEIHYLTADEEDRHVVAQANSPIDAQGRFVEPRVLVRRKAGEVEYVPSSEVDYMDVSPRQMVSVATAMIPFLEHDDANRALMGANMQRQAVPLVRSEAPLVGTGMELRAAIDAGDVVVADKAGVIEEVSADYITVMADDGTRHTYRMRKFARSNHGTCANQSPIVDAGERVEAGQVIADGPCTQNGEMALGKNLLVAIMPWEGHNYEDAIILSNRLVEEDVLTSIHIEEHEIDARDTKLGAEEITRDIPNVSDEVLADLDERGIVRIGAEVRDGDILVGKVTPKGETELTPEERLLRAIFGEKAREVRDTSLKVPHGESGKVIGIRVFSREDDDELPAGVNELVRVYVAQKRKISDGDKLAGRHGNKGVIGKILPAEDMPFLPDGTPVDIILNTHGVPRRMNIGQILETHLGWVAKSGWNIDVANGVPEWAGKLPENLLSAQPDSIVSTPVFDGAQEAELQGLLSATLPNRDGEVLVDGDGKAKLFDGRSGEPFPYPVTVGYMYIMKLHHLVDDKIHARSTGPYSMITQQPLGGKAQFGGQRFGEMECWAMQAYGAAYTLQELLTIKSDDTVGRVKVYEAIVKGENIPEPGIPESFKVLLKELQSLCLNVEVLSSDGAAIELREGEDEDLERAAANLGINLSRNESASVEDLA.

The span at 13–30 (TDASLHQGRPQSSSNSSV) shows a compositional bias: polar residues. The disordered stretch occupies residues 13-35 (TDASLHQGRPQSSSNSSVPGAPN).

Belongs to the RNA polymerase beta chain family. The RNAP catalytic core consists of 2 alpha, 1 beta, 1 beta' and 1 omega subunit. When a sigma factor is associated with the core the holoenzyme is formed, which can initiate transcription.

It carries out the reaction RNA(n) + a ribonucleoside 5'-triphosphate = RNA(n+1) + diphosphate. Its function is as follows. DNA-dependent RNA polymerase catalyzes the transcription of DNA into RNA using the four ribonucleoside triphosphates as substrates. The chain is DNA-directed RNA polymerase subunit beta from Mycobacterium ulcerans (strain Agy99).